A 145-amino-acid chain; its full sequence is MNIKPASEASLKDWLELRNKLWSDSEASHLQEMHQLLAEKYALQLLAYSDHQAIAMLEASIRFEYVNGTETSPVGFLEGIYVLPAHRRSGVATMLIRQAEVWAKQFSCTEFASDAALDNVISHAMHRSLGFQETEKVVYFSKKID.

The N-acetyltransferase domain maps to 1-145 (MNIKPASEAS…KVVYFSKKID (145 aa)). Residues Trp-22, Tyr-65, and Glu-78 each contribute to the substrate site. Residue 80–82 (IYV) coordinates acetyl-CoA. Residue Asp-114 coordinates substrate. Asn-119 is a binding site for acetyl-CoA. Residue Glu-135 coordinates substrate.

Homodimer.

It catalyses the reaction kanamycin B + acetyl-CoA = N(6')-acetylkanamycin B + CoA + H(+). Functionally, catalyzes the transfer of an acetyl group from acetyl-CoA to the 6'-amino group of aminoglycoside molecules conferring resistance to antibiotics containing the purpurosamine ring including amikacin, kanamycin, tobramycin and netilmicin. The protein is Aminoglycoside N(6')-acetyltransferase type 1 of Acinetobacter haemolyticus.